Consider the following 586-residue polypeptide: Mitogen-activated protein kinase 15 (586 aa).

Residues 14-305 (YDIKKRLGKG…AEEALEHPYV (292 aa)) form the Protein kinase domain. ATP-binding positions include 20–28 (LGKGAYGIV) and Lys-43. Asp-138 acts as the Proton acceptor in catalysis. Disordered stretches follow at residues 354–506 (QKRE…DAPP) and 520–539 (NQRT…RFGR). The span at 382–393 (PAPPAGTNPAPQ) shows a compositional bias: pro residues. Low complexity predominate over residues 400 to 414 (PQRAAIAAPNQPPAQ). The span at 415–439 (KDSTQQSPKIKAPSSNPITHSTTHG) shows a compositional bias: polar residues. Over residues 452–463 (AGQQGAAGTTAQ) the composition is skewed to low complexity. A compositionally biased stretch (basic and acidic residues) spans 464 to 473 (EVRKEVESRS). Polar residues predominate over residues 484-498 (FSHSQQARAAATNSA).

As to quaternary structure, interacts with dvl2.

The protein localises to the cytoplasm. Its subcellular location is the cytoskeleton. It localises to the cilium basal body. It is found in the cell projection. The protein resides in the cilium. The protein localises to the cell junction. The enzyme catalyses L-seryl-[protein] + ATP = O-phospho-L-seryl-[protein] + ADP + H(+). It carries out the reaction L-threonyl-[protein] + ATP = O-phospho-L-threonyl-[protein] + ADP + H(+). In terms of biological role, atypical MAPK protein that regulates ciliogenesis by phosphorylating rcsd1 through its binding with dvl2. This Xenopus laevis (African clawed frog) protein is Mitogen-activated protein kinase 15.